The sequence spans 476 residues: Protein DETOXIFICATION 1 (476 aa).

Helical transmembrane passes span 35 to 55, 66 to 86, 117 to 137, 146 to 166, 184 to 204, 208 to 228, 260 to 280, 289 to 309, 331 to 351, 370 to 390, 402 to 422, and 433 to 453; these read AAPM…SVMV, GVAL…CGLV, IPIC…LISL, IAGS…IVIP, AVTT…LFGL, GPAM…SCYV, AAMI…SGLL, VLSI…GVAA, VLAG…LLFT, VADL…TAVL, IGAW…GIYL, and LWCG…IVTA.

This sequence belongs to the multi antimicrobial extrusion (MATE) (TC 2.A.66.1) family. Ubiquitous. Highest expression in flowers and stems.

Its subcellular location is the cell membrane. Its function is as follows. Efflux carrier for plant-derived alkaloids, antibiotics, heavy metal and other toxic compounds. Involved in cadmium detoxification. Requires probably a proton-motive force for the efflux. The chain is Protein DETOXIFICATION 1 from Arabidopsis thaliana (Mouse-ear cress).